The sequence spans 185 residues: Elongation factor P (185 aa).

The protein belongs to the elongation factor P family.

The protein localises to the cytoplasm. The protein operates within protein biosynthesis; polypeptide chain elongation. Involved in peptide bond synthesis. Stimulates efficient translation and peptide-bond synthesis on native or reconstituted 70S ribosomes in vitro. Probably functions indirectly by altering the affinity of the ribosome for aminoacyl-tRNA, thus increasing their reactivity as acceptors for peptidyl transferase. This chain is Elongation factor P, found in Clostridium botulinum (strain Alaska E43 / Type E3).